The chain runs to 247 residues: Aspartate/glutamate leucyltransferase (247 aa).

It belongs to the R-transferase family. Bpt subfamily.

The protein resides in the cytoplasm. It carries out the reaction N-terminal L-glutamyl-[protein] + L-leucyl-tRNA(Leu) = N-terminal L-leucyl-L-glutamyl-[protein] + tRNA(Leu) + H(+). The enzyme catalyses N-terminal L-aspartyl-[protein] + L-leucyl-tRNA(Leu) = N-terminal L-leucyl-L-aspartyl-[protein] + tRNA(Leu) + H(+). Functions in the N-end rule pathway of protein degradation where it conjugates Leu from its aminoacyl-tRNA to the N-termini of proteins containing an N-terminal aspartate or glutamate. In Chromohalobacter salexigens (strain ATCC BAA-138 / DSM 3043 / CIP 106854 / NCIMB 13768 / 1H11), this protein is Aspartate/glutamate leucyltransferase.